The following is a 619-amino-acid chain: Nucleolar GTP-binding protein 2 (619 aa).

Basic and acidic residues predominate over residues 1 to 10 (MGTGKKEKSR). The tract at residues 1–24 (MGTGKKEKSRIQRQGKVTGDPKVK) is disordered. Residues 222–383 (WNELYKVIDS…LIDCPGIVPP (162 aa)) form the CP-type G domain. GTP contacts are provided by residues 332 to 339 (GYPNVGKS) and 376 to 380 (DCPGI). Residues 473–619 (PWFTPAPEKE…PPKKQRRSRK (147 aa)) are disordered. The segment covering 489-500 (MEGREGRYGEMS) has biased composition (basic and acidic residues). Acidic residues predominate over residues 536–546 (SDSDSEVEEAA). Residues 547–556 (EEKGEEKSTA) show a composition bias toward basic and acidic residues. Residues 565–603 (SSDEEEDGEEEGSDVEDDEEGSDLDIEGASELEESESEA) are compositionally biased toward acidic residues.

Belongs to the TRAFAC class YlqF/YawG GTPase family. NOG2 subfamily.

It is found in the nucleus. The protein localises to the nucleolus. In terms of biological role, GTPase that associates with pre-60S ribosomal subunits in the nucleolus and is required for their nuclear export and maturation. The chain is Nucleolar GTP-binding protein 2 (nog-2) from Neurospora crassa (strain ATCC 24698 / 74-OR23-1A / CBS 708.71 / DSM 1257 / FGSC 987).